Reading from the N-terminus, the 601-residue chain is Glutamine--fructose-6-phosphate aminotransferase [isomerizing] (601 aa).

C2 (nucleophile; for GATase activity) is an active-site residue. In terms of domain architecture, Glutamine amidotransferase type-2 spans 2-214 (CGITGYIGTD…NGDIAHLTET (213 aa)). 2 consecutive SIS domains span residues 281–420 (STET…ARNA) and 453–591 (IGRE…IDKP). Catalysis depends on K596, which acts as the For Fru-6P isomerization activity.

Homodimer.

Its subcellular location is the cytoplasm. The catalysed reaction is D-fructose 6-phosphate + L-glutamine = D-glucosamine 6-phosphate + L-glutamate. Its function is as follows. Catalyzes the first step in hexosamine metabolism, converting fructose-6P into glucosamine-6P using glutamine as a nitrogen source. The polypeptide is Glutamine--fructose-6-phosphate aminotransferase [isomerizing] (Halobacterium salinarum (strain ATCC 700922 / JCM 11081 / NRC-1) (Halobacterium halobium)).